The primary structure comprises 658 residues: PTS system 2-O-alpha-mannosyl-D-glycerate-specific EIIABC component (658 aa).

The Periplasmic portion of the chain corresponds to 1–313; it reads MVLFYRAHWR…TELKQALLSG (313 aa). The 147-residue stretch at 25 to 171 folds into the PTS EIIA type-2 domain; that stretch reads TLTHRDALCL…DELLSALDDK (147 aa). His87 serves as the catalytic Tele-phosphohistidine intermediate; for EIIA activity. Residue His87 is modified to Phosphohistidine; by HPr. The PTS EIIB type-2 domain occupies 186–282; the sequence is IVCVTACPAG…AEALIQQALT (97 aa). Cys192 (phosphocysteine intermediate; for EIIB activity) is an active-site residue. Cys192 is modified (phosphocysteine; by EIIA). The 336-residue stretch at 306-641 folds into the PTS EIIC type-2 domain; that stretch reads LKQALLSGIS…AISTAILLMW (336 aa). A helical transmembrane segment spans residues 314-334; sequence ISFAVPLIVAGGTVLAVAVLL. At 335–358 the chain is on the cytoplasmic side; it reads SQIFGLQDLFNEENSWLWMYRKLG. The helical transmembrane segment at 359 to 379 threads the bilayer; sequence GGLLGILMVPVLAAYTAYSLA. Residues 380-389 lie on the Periplasmic side of the membrane; it reads DKPALAPGFA. Residues 390–410 traverse the membrane as a helical segment; the sequence is AGLAANMIGSGFLGAVVGGLI. Topologically, residues 411–433 are cytoplasmic; it reads AGYLMRWVKNHLRLSSKFNGFLT. Residues 434-454 traverse the membrane as a helical segment; it reads FYLYPVLGTLGAGSLMLFVVG. Topologically, residues 455–474 are periplasmic; sequence EPVAWINNSLTAWLNGLSGS. The helical transmembrane segment at 475 to 495 threads the bilayer; it reads NALLLGAILGFMCSFDLGGPV. Over 496-500 the chain is Cytoplasmic; sequence NKAAY. Residues 501 to 521 form a helical membrane-spanning segment; the sequence is AFCLGAMANGVYGPYAIFASV. Residues 522 to 551 are Periplasmic-facing; sequence KMVSAFTVTASTMLAPRLFKEFEIETGKST. The helical transmembrane segment at 552–572 threads the bilayer; sequence WLLGLAGITEGAIPMAIEDPL. Arg573 is a topological domain (cytoplasmic). Residues 574 to 594 form a helical membrane-spanning segment; that stretch reads VIGSFVLGSMVTGAIVGAMNI. Residues 595–620 lie on the Periplasmic side of the membrane; sequence GLSTPGAGIFSLFLLHDNGAGGVMAA. Residues 621–641 traverse the membrane as a helical segment; it reads IGWFGAALVGAAISTAILLMW. The Cytoplasmic portion of the chain corresponds to 642–658; the sequence is RRHAVKHGNYLTDGVMP.

It is found in the cell inner membrane. The catalysed reaction is (2R)-2-O-(alpha-D-mannosyl)-glycerate(out) + N(pros)-phospho-L-histidyl-[protein] = (2R)-2-O-(6-phospho-alpha-D-mannosyl)-glycerate(in) + L-histidyl-[protein]. The phosphoenolpyruvate-dependent sugar phosphotransferase system (sugar PTS), a major carbohydrate active transport system, catalyzes the phosphorylation of incoming sugar substrates concomitantly with their translocation across the cell membrane. This system is involved in mannosyl-D-glycerate transport. Also involved in thermoinduction of ompC. This chain is PTS system 2-O-alpha-mannosyl-D-glycerate-specific EIIABC component, found in Escherichia coli (strain K12).